Consider the following 184-residue polypeptide: MLRTEKEKMAAGELYNSEDQQLLLERKHARQLIRQYNETPEDDAVRTKLLKELLGSVGDQVTILPTFRCDYGYHIHIGDHTFVNFDCVILDVCEVRIGCHCLIAPGVHIYTAGHPLDPIERKSGKEFGKPVTIGDQVWIGGRAVINPGVTIGDNAVIASGSVVTKDVPANTVVGGNPARILKQL.

Asparagine 84 contacts acetyl-CoA. Residue histidine 114 is the Proton donor/acceptor of the active site. Acetyl-CoA contacts are provided by residues glycine 141, serine 159, 164–165, arginine 179, and lysine 182; that span reads TK.

It belongs to the transferase hexapeptide repeat family. In terms of assembly, homodimer.

The catalysed reaction is D-maltose + acetyl-CoA = 1-O-acetylmaltose + CoA. In terms of biological role, catalyzes the CoA-dependent transfer of an acetyl group to maltose and other sugars. Acetylates glucose exclusively at the C6 position and maltose at the C6 position of the non-reducing end glucosyl moiety. Is able to acetylate maltooligosaccharides. In Bacillus subtilis (strain 168), this protein is Probable maltose O-acetyltransferase (maa).